Here is a 537-residue protein sequence, read N- to C-terminus: Eukaryotic translation initiation factor 3 subunit L (537 aa).

Positions T301 to H513 constitute a PCI domain.

It belongs to the eIF-3 subunit L family. Component of the eukaryotic translation initiation factor 3 (eIF-3) complex.

The protein resides in the cytoplasm. Its function is as follows. Component of the eukaryotic translation initiation factor 3 (eIF-3) complex, which is involved in protein synthesis of a specialized repertoire of mRNAs and, together with other initiation factors, stimulates binding of mRNA and methionyl-tRNAi to the 40S ribosome. The eIF-3 complex specifically targets and initiates translation of a subset of mRNAs involved in cell proliferation. The sequence is that of Eukaryotic translation initiation factor 3 subunit L from Aedes aegypti (Yellowfever mosquito).